The sequence spans 195 residues: Nucleoside triphosphate pyrophosphatase (195 aa).

Asp-70 serves as the catalytic Proton acceptor.

It belongs to the Maf family. It depends on a divalent metal cation as a cofactor.

The protein localises to the cytoplasm. It carries out the reaction a ribonucleoside 5'-triphosphate + H2O = a ribonucleoside 5'-phosphate + diphosphate + H(+). The enzyme catalyses a 2'-deoxyribonucleoside 5'-triphosphate + H2O = a 2'-deoxyribonucleoside 5'-phosphate + diphosphate + H(+). In terms of biological role, nucleoside triphosphate pyrophosphatase. May have a dual role in cell division arrest and in preventing the incorporation of modified nucleotides into cellular nucleic acids. This is Nucleoside triphosphate pyrophosphatase from Microcystis aeruginosa (strain NIES-843 / IAM M-2473).